The following is a 130-amino-acid chain: Small ribosomal subunit protein uS9 (130 aa).

It belongs to the universal ribosomal protein uS9 family.

The chain is Small ribosomal subunit protein uS9 from Cupriavidus metallidurans (strain ATCC 43123 / DSM 2839 / NBRC 102507 / CH34) (Ralstonia metallidurans).